Consider the following 144-residue polypeptide: 3-dehydroquinate dehydratase (144 aa).

The active-site Proton acceptor is the Y22. Residues N71, H77, and D84 each coordinate substrate. The Proton donor role is filled by H97. Substrate contacts are provided by residues 98 to 99 (IS) and R108.

Belongs to the type-II 3-dehydroquinase family. Homododecamer.

The enzyme catalyses 3-dehydroquinate = 3-dehydroshikimate + H2O. It participates in metabolic intermediate biosynthesis; chorismate biosynthesis; chorismate from D-erythrose 4-phosphate and phosphoenolpyruvate: step 3/7. Catalyzes a trans-dehydration via an enolate intermediate. This Thermotoga maritima (strain ATCC 43589 / DSM 3109 / JCM 10099 / NBRC 100826 / MSB8) protein is 3-dehydroquinate dehydratase (aroQ).